Consider the following 1128-residue polypeptide: MENNNNNNINKTNTPNNSFSPIKNRIEHFERMSSSPNISIPLSQKEYYCSPKKNISLNNINHNINYNNNNNNNNNNNNNNNNNNNNNNNNNNNNNNNNNNNCIVGESNIINNNKDDYNSNNNSTINYNIVRESNSNNNSNNSNININNNSNNNFEKEKIIENNKEYINSDFDSISNNDNNNYNNNNIFIFEKIEYNKEEIDCVIAINSDIESNKNDENDDNYKNHNYEIIIVGENNNSKEDCNSSNNSYDNDSNSNSDISTSVNCNSINNNDTIDKNNSTNIIKSIENNNKNNYNKNNNKNNIKSIFENILIKVFTIIDKESSKLIQGLKIENKLKSQLSYLEEDYIYQTVLAILQTKVLQVIFNDVFPNSNIYNDNENNNNNNNNNNNNNNNNNNNNNNINNYIVEESNNNISVIDNNNNSDNNNNNNNNNNNNNNNNNNNNNNNNNNNNNKSNNYIVEESNNNSVIDNNNSVIDNNNNINNNSNNNNNNNNNNNNNNNNSEQNFTYNEKKIQNPIIRCIRNLREIRIKKIPKNIHVDLFQDYRNIQIIHNQFPELFTDSINDCYKIFHHFCLTYSGPDVKQFLCEFSKIGVISCSDENENSSLYYAIENKVNGLQLVCEMVCNGLINIEMAKKTNKHGHSILCKCINLKNIPILKLLISFGFDHFEICQNCKNTDQDIQDIFDDIYFSMAYFSTIPDSVNGKLIKTNIALLTELIYSQEKLKLLFKVANAPVPTEIEKAVNKFIFKMDDYKTKYNLKKNEIESIEKVGIIDKSQLSDFSIIGEGGFSTVHKATYINLQNTITPVAIKSFKNYDDDSFERIYKEVSVHQSLQGENILKLIGVSKLKFGLSIIIEKCDMDLKNFISCNQINLDLFFILSTQMVNSVSQVHNHYPEAEINVYHRDIKLENWLIKTIDGNHTVFISDFGLSRSNTESNGCTLQQIRGTNLHIAPECYKGFLFSSQSDIFSVGISLYQLAYKLVYGKFVHPYHEYQIADEPENLNIIQNTGLIPTIPPNLPSRLKRLLFLMMSKMPERRPSIKECIEEIQKCKEEYESDRTKWDTEISVHEDYSLLNEQMINQYHYIKSDVLDYIRDFDLNQNPHDNYVQELESFDYSSYFIKCKSFNEDR.

The span at 1–17 shows a compositional bias: low complexity; the sequence is MENNNNNNINKTNTPNN. Disordered stretches follow at residues 1 to 21, 60 to 100, 131 to 151, 236 to 256, and 375 to 504; these read MENNNNNNINKTNTPNNSFSP, INHN…NNNN, RESNSNNNSNNSNININNNSN, NNSKEDCNSSNNSYDNDSNSN, and NDNE…NSEQ. 2 stretches are compositionally biased toward low complexity: residues 243 to 256 and 375 to 502; these read NSSNNSYDNDSNSN and NDNE…NNNS. The Protein kinase domain maps to 777-1054; it reads LSDFSIIGEG…EIQKCKEEYE (278 aa). ATP-binding positions include 783 to 791 and Lys-809; that span reads IGEGGFSTV. The active-site Proton acceptor is the Asp-904.

This sequence belongs to the protein kinase superfamily. Ser/Thr protein kinase family.

It catalyses the reaction L-seryl-[protein] + ATP = O-phospho-L-seryl-[protein] + ADP + H(+). It carries out the reaction L-threonyl-[protein] + ATP = O-phospho-L-threonyl-[protein] + ADP + H(+). The polypeptide is Probable serine/threonine-protein kinase DDB_G0283337 (Dictyostelium discoideum (Social amoeba)).